A 603-amino-acid polypeptide reads, in one-letter code: MTKQAPPTTVLPLSEEQLDRLQTATGDLSPLQLAWISGYFWGRVAEGKPAVPPPSQSAAAAAPITLISASQTGNARRLAEQLRDDLIAARLDVVLINAGDYKFKQIAQEKLLLIITSTQGEGDPPEEAVALYKYLFSKKAPALPSTQFAVFGLGDSSYEHFAKTGKDFDSRLAELGAQRLHDRVDADVDYQAQAETWRAAIVEQLKSRVAVASPAQQQLAASGNVNEVDSSPYTKEAPLTAHLALSQKITSRQSLKDVRHLEIDLTDSGLRYQPGDALGVWYENDPALICELLALLWLKGKGDEPVPVAGQTLPLAEALQKHYELTQNTPAIVAGYAAFARDEALLAVVADKAQLQQFALATPIVDMVRRAPIELSAEQLLSLLRPLTPRLYSIASSQAEVGEEVHITVGVVRYEIDGRPRTGGASGYLADRLGEDDELRVFIEHNDNFRLPGDPNTPVIMIGPGTGIAPFRAFLQQREADGAPGQNWLFFGNPHFTDDFLYQVEWQRYVKERLLTKISLAWSRDQAEKIYVQDRVREQGAEVWRWIQQGAHIYVCGDANRMARDVEQALVAVVAEYGCMDPEQADEYLSELRIERRYQRDVY.

Residues 64–202 (ITLISASQTG…QAETWRAAIV (139 aa)) enclose the Flavodoxin-like domain. FMN is bound by residues 70-75 (SQTGNA), 117-120 (STQG), and 153-162 (LGDSSYEHFA). Positions 236–452 (EAPLTAHLAL…IEHNDNFRLP (217 aa)) constitute an FAD-binding FR-type domain. Residues T326, L360, 390–393 (RLYS), 408–410 (TVG), Y414, and 423–426 (GGAS) contribute to the FAD site. Residues 523 to 524 (SR), 529 to 533 (KIYVQ), and D565 contribute to the NADP(+) site. Y603 contributes to the FAD binding site.

It belongs to the NADPH-dependent sulphite reductase flavoprotein subunit CysJ family. The protein in the N-terminal section; belongs to the flavodoxin family. This sequence in the C-terminal section; belongs to the flavoprotein pyridine nucleotide cytochrome reductase family. As to quaternary structure, alpha(8)-beta(8). The alpha component is a flavoprotein, the beta component is a hemoprotein. FAD serves as cofactor. The cofactor is FMN.

It carries out the reaction hydrogen sulfide + 3 NADP(+) + 3 H2O = sulfite + 3 NADPH + 4 H(+). It participates in sulfur metabolism; hydrogen sulfide biosynthesis; hydrogen sulfide from sulfite (NADPH route): step 1/1. Its function is as follows. Component of the sulfite reductase complex that catalyzes the 6-electron reduction of sulfite to sulfide. This is one of several activities required for the biosynthesis of L-cysteine from sulfate. The flavoprotein component catalyzes the electron flow from NADPH -&gt; FAD -&gt; FMN to the hemoprotein component. This is Sulfite reductase [NADPH] flavoprotein alpha-component from Sodalis glossinidius (strain morsitans).